Consider the following 696-residue polypeptide: Polyribonucleotide nucleotidyltransferase (696 aa).

Residues D489 and D495 each coordinate Mg(2+). Residues P556–I615 enclose the KH domain. Residues G625 to K693 form the S1 motif domain.

Belongs to the polyribonucleotide nucleotidyltransferase family. As to quaternary structure, component of the RNA degradosome, which is a multiprotein complex involved in RNA processing and mRNA degradation. Mg(2+) is required as a cofactor.

Its subcellular location is the cytoplasm. The enzyme catalyses RNA(n+1) + phosphate = RNA(n) + a ribonucleoside 5'-diphosphate. Involved in mRNA degradation. Catalyzes the phosphorolysis of single-stranded polyribonucleotides processively in the 3'- to 5'-direction. In Coxiella burnetii (strain CbuG_Q212) (Coxiella burnetii (strain Q212)), this protein is Polyribonucleotide nucleotidyltransferase.